We begin with the raw amino-acid sequence, 299 residues long: Serpentine receptor class gamma-30 (299 aa).

A run of 7 helical transmembrane segments spans residues 18-38 (GIQFVYFIVGLGFHFAVIKVL), 59-79 (ILSVLIILLDLVLIRVFNYIP), 98-118 (ILFIEQYLQFVKSLIFCFMVV), 137-157 (IIPHVIVFCILCPLLGVWTAF), 189-209 (IISSITIVTVCICSVISMLCI), 223-243 (LTASALAMSIFYVFALSMNIY), and 260-280 (ALTAFAFDIILVCPPVIMLCL).

This sequence belongs to the nematode receptor-like protein srg family.

It localises to the membrane. This is Serpentine receptor class gamma-30 (srg-30) from Caenorhabditis elegans.